The sequence spans 67 residues: Small ribosomal subunit protein bS21 (67 aa).

It belongs to the bacterial ribosomal protein bS21 family.

The protein is Small ribosomal subunit protein bS21 (rpsU) of Aquifex aeolicus (strain VF5).